We begin with the raw amino-acid sequence, 498 residues long: MIDSLSFTTMPVVLLVGLVLYQLLAFTYRLFFSPLAKFPGQKIAGMTHWYEFYHDVIRRGQYTFHIRDMHKKYGPILRINPYELHISDPSFYNEIYAVQNRRRDRWEWSTRPGGFGGSVGGTNPHELHRRRRAALNPFFSRANIRKLQHEIDQKAVQLVERLEKETDRVIKVNHAFAALTNDIVMQYSFGRDDNRAAHKDRAARALPMEMLSKISSVVAMFWQEKQSITEEVRQILNGTNKAYKERPNRTIYHGILESKLPPEEKELNRLAEEAQITIGAGTLATAWVMSVGMYHLLAPGSVSMLKTLREELQRAIPDPSEPIDLAALEKLPYLTGVVKECLRLGNGTTTRLQRIAPDETLIYTDPNTGKVWDIPPGTPVSLSSLHIHHDETIFADPESFRPERWIENPDLERYLLTFSKGSRQCLGIHLAYAEMYIVLARVFRLYGRKEEGPSKGPSDKLGNLELFETELRDTLCVADLVVPAVWEGSQGIRIKVTE.

A helical transmembrane segment spans residues 7-27; it reads FTTMPVVLLVGLVLYQLLAFT. N-linked (GlcNAc...) asparagine glycans are attached at residues asparagine 237, asparagine 248, and asparagine 346. Cysteine 425 is a binding site for heme.

It belongs to the cytochrome P450 family. It depends on heme as a cofactor.

It is found in the membrane. The enzyme catalyses preasperterpenoid A + 4 reduced [NADPH--hemoprotein reductase] + 4 O2 = asperterpenoid A + 4 oxidized [NADPH--hemoprotein reductase] + 5 H2O + 5 H(+). The catalysed reaction is asperterpenoid A + 2 reduced [NADPH--hemoprotein reductase] + 2 O2 = asperterpenoid B + 2 oxidized [NADPH--hemoprotein reductase] + 3 H2O + 3 H(+). It participates in secondary metabolite biosynthesis; terpenoid biosynthesis. Its function is as follows. Cytochrome P450 monooxygenase; part of the gene cluster that mediates the biosynthesis of the asperterpenoids, sesterterpenes that exhibit anti-tuberculosis activity. The first step of the pathway is performed by the sesterterpene synthase astC that possesses both prenyl transferase and terpene cyclase activity, converting isopentenyl diphosphate and dimethylallyl diphosphate into geranylfarnesyl diphosphate (GFPP) and further converting GFPP into preasperterpenoid A, respectively. The cytochrome P450 monooxygenase astB then dually oxidizes preasperterpenoid A to produce asperterpenoid A along with a minor product, asperterpenoid B. Finally, the cytochrome P450 monooxygenase astA converts asperterpenoid A into asperterpenoid C. The polypeptide is Cytochrome P450 monooxygenase astB (Talaromyces wortmannii (Penicillium wortmannii)).